Reading from the N-terminus, the 60-residue chain is MKVFSAVLIILFVCSMIIGISEGKEIPVKCKHSGQCLQPCKDAGMRFGKCMNGKCNCTPK.

An N-terminal signal peptide occupies residues Met1–Gly23. Disulfide bonds link Cys30/Cys50, Cys36/Cys55, and Cys40/Cys57.

The protein belongs to the short scorpion toxin superfamily. Potassium channel inhibitor family. Alpha-KTx 03 subfamily. In terms of tissue distribution, expressed by the venom gland.

The protein resides in the secreted. In terms of biological role, potassium channel inhibitor. This is Potassium channel toxin alpha-KTx 3.16 from Mesobuthus gibbosus (Mediterranean checkered scorpion).